Consider the following 145-residue polypeptide: Basic phospholipase A2 S11-61 (145 aa).

Positions 1–19 (MYPVHLLVLLAVCVSLLGA) are cleaved as a signal peptide. A propeptide spanning residues 20–27 (SNIPPQPL) is cleaved from the precursor. Cystine bridges form between Cys38/Cys98, Cys54/Cys144, Cys56/Cys72, Cys71/Cys125, Cys78/Cys118, Cys87/Cys111, and Cys105/Cys116. Tyr55, Gly57, and Gly59 together coordinate Ca(2+). Residue His75 is part of the active site. Ca(2+) is bound at residue Asp76. Asp119 is an active-site residue.

It belongs to the phospholipase A2 family. Group I subfamily. D49 sub-subfamily. It depends on Ca(2+) as a cofactor. As to expression, expressed by the venom gland.

The protein resides in the secreted. The enzyme catalyses a 1,2-diacyl-sn-glycero-3-phosphocholine + H2O = a 1-acyl-sn-glycero-3-phosphocholine + a fatty acid + H(+). Functionally, snake venom phospholipase A2 (PLA2) that inhibits collagen-induced platelet aggregation. PLA2 catalyzes the calcium-dependent hydrolysis of the 2-acyl groups in 3-sn-phosphoglycerides. In Austrelaps superbus (Lowland copperhead snake), this protein is Basic phospholipase A2 S11-61.